The following is a 235-amino-acid chain: Claudin-16 (235 aa).

Over 1-3 (MKD) the chain is Cytoplasmic. A helical transmembrane segment spans residues 4 to 24 (LLQYAACFLAIFSTGFLIVAT). Over 25–79 (WTDCWMVNADDSLEVSTKCRGLWWECVTNAFDGIRTCDEYDSIYAEHPLKLVVTR) the chain is Extracellular. Residues 80–100 (ALMITADILAGFGFITLLLGL) form a helical membrane-spanning segment. The Cytoplasmic segment spans residues 101–115 (DCVKFLPDDPQIKVR). Residues 116–136 (LCFVAGTTLLIAGTPGIIGSV) traverse the membrane as a helical segment. Residues 137–169 (WYAVDVYVERSSLVLHNIFLGIQYKFGWSCWLG) lie on the Extracellular side of the membrane. The helical transmembrane segment at 170–190 (MAGSLGCFLAGALLTCCLYLF) threads the bilayer. Residues 191–235 (KDVGPERNYPYAMRKPYSTAGVSMAKSYKAPRTETAKMYAVDTRV) are Cytoplasmic-facing. The Interaction with TJP1 motif lies at 233 to 235 (TRV).

Belongs to the claudin family. In terms of assembly, can form heteropolymeric tight junction strands with other claudins. Interacts with CLDN19. Cannot form tight junction strands on its own. Interacts (via PDZ-binding motif TRV) with TJP1 (via PDZ domain). In terms of tissue distribution, expressed in the corticomedullary axis of the TAL, specifically in the cortex and the outer stripe of outer medulla (OSOM) zone (at protein level).

Its subcellular location is the cell junction. The protein resides in the tight junction. It localises to the cell membrane. It carries out the reaction Mg(2+)(in) = Mg(2+)(out). The catalysed reaction is Ca(2+)(in) = Ca(2+)(out). The enzyme catalyses Na(+)(in) = Na(+)(out). It catalyses the reaction K(+)(in) = K(+)(out). It carries out the reaction Rb(+)(in) = Rb(+)(out). The catalysed reaction is Cs(+)(in) = Cs(+)(out). The enzyme catalyses Li(+)(in) = Li(+)(out). Its function is as follows. Forms paracellular channels: coassembles with CLDN19 into tight junction strands with cation-selective channels through the strands, conveying epithelial permeability in a process known as paracellular tight junction permeability. Involved in the maintenance of ion gradients along the nephron. In the thick ascending limb (TAL) of Henle's loop, facilitates sodium paracellular permeability from the interstitial compartment to the lumen, contributing to the lumen-positive transepithelial potential that drives paracellular magnesium and calcium reabsorption. This chain is Claudin-16, found in Mus musculus (Mouse).